The following is a 376-amino-acid chain: Alcohol dehydrogenase class-3 (376 aa).

7 residues coordinate Zn(2+): cysteine 40, histidine 62, cysteine 92, cysteine 95, cysteine 98, cysteine 106, and cysteine 170.

Belongs to the zinc-containing alcohol dehydrogenase family. Class-III subfamily. As to quaternary structure, homodimer. The cofactor is Zn(2+).

It is found in the cytoplasm. The catalysed reaction is a primary alcohol + NAD(+) = an aldehyde + NADH + H(+). The enzyme catalyses a secondary alcohol + NAD(+) = a ketone + NADH + H(+). It carries out the reaction S-(hydroxymethyl)glutathione + NADP(+) = S-formylglutathione + NADPH + H(+). It catalyses the reaction S-(hydroxymethyl)glutathione + NAD(+) = S-formylglutathione + NADH + H(+). Functionally, oxidizes long-chain aliphatic alcohols, long-chain hydroxylated fatty acids and S-hydroxymethylglutathione (hmGSH) in increasing order of preference. Shows little or no activity with short-chain aliphatic alcohols. The chain is Alcohol dehydrogenase class-3 (adhI) from Cereibacter sphaeroides (strain ATCC 17023 / DSM 158 / JCM 6121 / CCUG 31486 / LMG 2827 / NBRC 12203 / NCIMB 8253 / ATH 2.4.1.) (Rhodobacter sphaeroides).